The primary structure comprises 134 residues: Profilin-5 (134 aa).

A disulfide bridge connects residues cysteine 13 and cysteine 118. The short motif at alanine 84 to threonine 100 is the Involved in PIP2 interaction element. The residue at position 114 (threonine 114) is a Phosphothreonine.

Belongs to the profilin family. As to quaternary structure, occurs in many kinds of cells as a complex with monomeric actin in a 1:1 ratio. Phosphorylated by MAP kinases.

Its subcellular location is the cytoplasm. The protein localises to the cytoskeleton. Functionally, binds to actin and affects the structure of the cytoskeleton. At high concentrations, profilin prevents the polymerization of actin, whereas it enhances it at low concentrations. In Olea europaea (Common olive), this protein is Profilin-5.